We begin with the raw amino-acid sequence, 206 residues long: Pyridoxal 5'-phosphate synthase subunit PdxT (206 aa).

59-61 is an L-glutamine binding site; sequence GES. Residue cysteine 91 is the Nucleophile of the active site. L-glutamine contacts are provided by residues arginine 123 and 151-152; that span reads IR. Residues histidine 187 and glutamate 189 each act as charge relay system in the active site.

Belongs to the glutaminase PdxT/SNO family. As to quaternary structure, in the presence of PdxS, forms a dodecamer of heterodimers. Only shows activity in the heterodimer.

It carries out the reaction aldehydo-D-ribose 5-phosphate + D-glyceraldehyde 3-phosphate + L-glutamine = pyridoxal 5'-phosphate + L-glutamate + phosphate + 3 H2O + H(+). It catalyses the reaction L-glutamine + H2O = L-glutamate + NH4(+). Its pathway is cofactor biosynthesis; pyridoxal 5'-phosphate biosynthesis. In terms of biological role, catalyzes the hydrolysis of glutamine to glutamate and ammonia as part of the biosynthesis of pyridoxal 5'-phosphate. The resulting ammonia molecule is channeled to the active site of PdxS. This Mycobacterium sp. (strain JLS) protein is Pyridoxal 5'-phosphate synthase subunit PdxT.